The following is a 101-amino-acid chain: Chaperone modulatory protein CbpM (101 aa).

This sequence belongs to the CbpM family.

Its function is as follows. Interacts with CbpA and inhibits both the DnaJ-like co-chaperone activity and the DNA binding activity of CbpA. Together with CbpA, modulates the activity of the DnaK chaperone system. Does not inhibit the co-chaperone activity of DnaJ. The sequence is that of Chaperone modulatory protein CbpM from Pseudomonas entomophila (strain L48).